A 544-amino-acid chain; its full sequence is Glucose-6-phosphate isomerase (544 aa).

Residue glutamate 354 is the Proton donor of the active site. Catalysis depends on residues histidine 385 and lysine 510.

This sequence belongs to the GPI family.

It localises to the cytoplasm. The enzyme catalyses alpha-D-glucose 6-phosphate = beta-D-fructose 6-phosphate. It participates in carbohydrate biosynthesis; gluconeogenesis. Its pathway is carbohydrate degradation; glycolysis; D-glyceraldehyde 3-phosphate and glycerone phosphate from D-glucose: step 2/4. Catalyzes the reversible isomerization of glucose-6-phosphate to fructose-6-phosphate. This is Glucose-6-phosphate isomerase from Deinococcus deserti (strain DSM 17065 / CIP 109153 / LMG 22923 / VCD115).